A 510-amino-acid chain; its full sequence is Histidine ammonia-lyase (510 aa).

Residues Ala145–Gly147 constitute a cross-link (5-imidazolinone (Ala-Gly)). The residue at position 146 (Ser146) is a 2,3-didehydroalanine (Ser).

This sequence belongs to the PAL/histidase family. Contains an active site 4-methylidene-imidazol-5-one (MIO), which is formed autocatalytically by cyclization and dehydration of residues Ala-Ser-Gly.

The protein resides in the cytoplasm. The catalysed reaction is L-histidine = trans-urocanate + NH4(+). The protein operates within amino-acid degradation; L-histidine degradation into L-glutamate; N-formimidoyl-L-glutamate from L-histidine: step 1/3. The sequence is that of Histidine ammonia-lyase from Stigmatella aurantiaca.